Reading from the N-terminus, the 403-residue chain is Formin-like protein 21b (403 aa).

The FH2 domain maps to 1–380 (MELLFTATLL…KAAKEAEMEK (380 aa)). The disordered stretch occupies residues 373 to 403 (AKEAEMEKTKKRVSLTNKKASGVGEEESCLI).

The protein belongs to the formin-like family. Class-II subfamily.

The polypeptide is Formin-like protein 21b (FH21B) (Arabidopsis thaliana (Mouse-ear cress)).